A 237-amino-acid chain; its full sequence is MASNDTPAFANNEIMLKCEGLTRIYREGPQDVTVLDALELDVRAGERVAVVGSSGSGKTTLLNLLGGLDRPSAGEVRIAGQSLAEMGEAALGSFRNRHIGFVYQFHHLLAEFSALENVAMPLLIRGQTRQEAQARAREILAKVGMEARGEHKPGELSGGERQRVAIARALVTDPSLVLMDEPTGNLDQTTAGHILALMDGLAAQSACAFIIVTHDPGLAAHQDRVMRLDQGRLSEDA.

An ABC transporter domain is found at 16–237; the sequence is LKCEGLTRIY…LDQGRLSEDA (222 aa). 52 to 59 is a binding site for ATP; that stretch reads GSSGSGKT.

This sequence belongs to the ABC transporter superfamily. Lipoprotein translocase (TC 3.A.1.125) family. In terms of assembly, the complex is composed of two ATP-binding proteins (LolD) and two transmembrane proteins (LolC and LolE).

It localises to the cell inner membrane. Its function is as follows. Part of the ABC transporter complex LolCDE involved in the translocation of mature outer membrane-directed lipoproteins, from the inner membrane to the periplasmic chaperone, LolA. Responsible for the formation of the LolA-lipoprotein complex in an ATP-dependent manner. The chain is Lipoprotein-releasing system ATP-binding protein LolD from Chromohalobacter salexigens (strain ATCC BAA-138 / DSM 3043 / CIP 106854 / NCIMB 13768 / 1H11).